A 425-amino-acid chain; its full sequence is 5-nitroanthranilic acid aminohydrolase (425 aa).

Residue Asp-88 is part of the active site. Catalysis depends on Glu-158, which acts as the Proton acceptor.

Belongs to the peptidase M20A family. Co(2+) serves as cofactor. Mn(2+) is required as a cofactor. The cofactor is Zn(2+). Requires Fe(2+) as cofactor. It depends on Ni(2+) as a cofactor.

The catalysed reaction is 5-nitroanthranilate + H2O + H(+) = 5-nitrosalicylate + NH4(+). In terms of biological role, catalyzes the deamination of 5-nitroanthranilate (5NAA) to 5-nitrosalicylate (5NSA), the first step in biodegradation of 5-nitroanthranilate. This Bradyrhizobium sp protein is 5-nitroanthranilic acid aminohydrolase (naaA).